The chain runs to 222 residues: uncharacterized protein (222 aa).

Residues Ala-142–Leu-222 are disordered. A compositionally biased stretch (low complexity) spans Gln-160–Ala-169. Positions Pro-182–Arg-196 are enriched in basic residues.

The protein belongs to the Rv1128c/1148c/1588c/1702c/1945/3466 family.

This is an uncharacterized protein from Mycobacterium tuberculosis (strain ATCC 25618 / H37Rv).